We begin with the raw amino-acid sequence, 176 residues long: PRELI domain-containing protein 2 (176 aa).

In terms of domain architecture, PRELI/MSF1 spans 1–175; sequence MGIAVEARKV…ILRERCGCPF (175 aa).

This is PRELI domain-containing protein 2 (prelid2) from Xenopus tropicalis (Western clawed frog).